Consider the following 110-residue polypeptide: Large ribosomal subunit protein uL22 (110 aa).

The protein belongs to the universal ribosomal protein uL22 family. In terms of assembly, part of the 50S ribosomal subunit.

In terms of biological role, this protein binds specifically to 23S rRNA; its binding is stimulated by other ribosomal proteins, e.g. L4, L17, and L20. It is important during the early stages of 50S assembly. It makes multiple contacts with different domains of the 23S rRNA in the assembled 50S subunit and ribosome. The globular domain of the protein is located near the polypeptide exit tunnel on the outside of the subunit, while an extended beta-hairpin is found that lines the wall of the exit tunnel in the center of the 70S ribosome. This is Large ribosomal subunit protein uL22 from Citrobacter koseri (strain ATCC BAA-895 / CDC 4225-83 / SGSC4696).